The primary structure comprises 506 residues: Aminoaldehyde dehydrogenase 1b (506 aa).

Asp-102 is a binding site for Na(+). NAD(+)-binding positions include 162 to 164 and 188 to 191; these read TPW and KPSE. Leu-192 is a binding site for Na(+). NAD(+) is bound by residues 242-245 and Glu-263; that span reads SFET. Glu-263 serves as the catalytic Proton acceptor. Residue Cys-297 is the Nucleophile of the active site. Positions 396 and 462 each coordinate NAD(+).

It belongs to the aldehyde dehydrogenase family.

It catalyses the reaction 4-aminobutanal + NAD(+) + H2O = 4-aminobutanoate + NADH + 2 H(+). It carries out the reaction 3-aminopropanal + NAD(+) + H2O = beta-alanine + NADH + 2 H(+). The enzyme catalyses 4-(trimethylamino)butanal + NAD(+) + H2O = 4-(trimethylamino)butanoate + NADH + 2 H(+). The catalysed reaction is 4-guanidinobutanal + NAD(+) + H2O = 4-guanidinobutanoate + NADH + 2 H(+). It catalyses the reaction betaine aldehyde + NAD(+) + H2O = glycine betaine + NADH + 2 H(+). Its pathway is amine and polyamine biosynthesis; betaine biosynthesis via choline pathway; betaine from betaine aldehyde: step 1/1. Dehydrogenase that catalyzes the oxidation of several aminoaldehydes. Metabolizes and detoxifies aldehyde products of polyamine degradation to non-toxic amino acids. Catalyzes the oxidation of 4-aminobutanal and 3-aminopropanal to 4-aminobutanoate and beta-alanine, respectively. Catalyzes the oxidation of 4-(trimethylamino)butanal and 4-guanidinobutanal to 4-trimethylammoniobutanoate and 4-guanidinobutanoate, respectively. Catalyzes the oxidation of betaine aldehyde to glycine betaine. The chain is Aminoaldehyde dehydrogenase 1b from Zea mays (Maize).